The primary structure comprises 342 residues: Manganese-dependent ADP-ribose/CDP-alcohol diphosphatase (342 aa).

Zn(2+) is bound by residues Asp-18, Gln-20, Asp-67, Asn-103, His-239, His-276, and His-278.

This sequence belongs to the ADPRibase-Mn family. In terms of assembly, monomer. Mg(2+) is required as a cofactor.

The catalysed reaction is CDP-choline + H2O = phosphocholine + CMP + 2 H(+). The enzyme catalyses ADP-D-ribose + H2O = D-ribose 5-phosphate + AMP + 2 H(+). It carries out the reaction CDP-glycerol + H2O = sn-glycerol 3-phosphate + CMP + 2 H(+). In terms of biological role, hydrolyzes ADP-ribose, IDP-ribose, CDP-glycerol, CDP-choline and CDP-ethanolamine, but not other non-reducing ADP-sugars or CDP-glucose. The chain is Manganese-dependent ADP-ribose/CDP-alcohol diphosphatase (adprm) from Xenopus tropicalis (Western clawed frog).